The sequence spans 990 residues: Protein SUPPRESSOR OF MAX2 1 (990 aa).

A Clp R domain is found at 8–167 (IQQTLTPEAA…KATIEQSLNN (160 aa)). Repeat regions lie at residues 12-83 (LTPE…LERL) and 96-167 (ISNA…SLNN). The tract at residues 818 to 855 (PKKEHGSGLSFDLNQAADTDDGSHNTSDLTTDNDQDEQ) is disordered. The short motif at 828–832 (FDLNQ) is the EAR element.

This sequence belongs to the ClpA/ClpB family. As to quaternary structure, interacts probably with TPL/TPR in an EAR-motif dependent manner. Interacts with TPL, TPR1, TPR2 and TPR4. Highly expressed in dry seeds. Expressed in seedlings, rosette leaves and senescing leaves. Detected in roots and axillary shoots. Expressed in the primary rosette buds and expanding leaves of adult rosettes, the vasculature of the hypocotyls, cotyledons, and mature roots, in the midvein and petioles of young leaves, the young leaf periphery, stomata, and the root caps.

Probable component of a transcriptional corepressor complex that acts downstream of MAX2 to negatively regulate karrikins/strigolactone responses. Probable target of MAX2 during germination and seedling photomorphogenesis. Acts probably specifically in the karrikin pathway. The sequence is that of Protein SUPPRESSOR OF MAX2 1 from Arabidopsis thaliana (Mouse-ear cress).